Consider the following 352-residue polypeptide: S-adenosylmethionine:tRNA ribosyltransferase-isomerase (352 aa).

The protein belongs to the QueA family. In terms of assembly, monomer.

It localises to the cytoplasm. It carries out the reaction 7-aminomethyl-7-carbaguanosine(34) in tRNA + S-adenosyl-L-methionine = epoxyqueuosine(34) in tRNA + adenine + L-methionine + 2 H(+). It functions in the pathway tRNA modification; tRNA-queuosine biosynthesis. Functionally, transfers and isomerizes the ribose moiety from AdoMet to the 7-aminomethyl group of 7-deazaguanine (preQ1-tRNA) to give epoxyqueuosine (oQ-tRNA). This chain is S-adenosylmethionine:tRNA ribosyltransferase-isomerase, found in Paraburkholderia xenovorans (strain LB400).